A 377-amino-acid chain; its full sequence is MPKTAFITGANGLSGSAIVEYLCNTTTSDDWGSIIVTSRSPFKSTVMDPRIKFIALDFVNDVSSLVETMKEVCGAVTHAYFCSYLHKDDFAESYTVNKALFENFIAAIDKAAPKLENVTLQTGGKYYNLHVEPVPSPARENDPRRYGPFENFYFTQEDTLAEMQRGKTWSWNVIRPEAIIGANSQPYGLNVALTIAMYFLICRELGSASPMPTNQRYWEGTDDVSYAPLIADLTIFVSTRKSCANEAFNVTNGDYFTWRYMWPRLAASLGAKADSQQCFEKPMPGEGELQLDWSLAEWCKDKRKVWEDLCDRQGLPGAKATFDLAGWAVGDFLYQRTWSATLSVNKARRFGWTGHMDSYQSFVDTFDKFRQLGLIPK.

Asp-89, Gln-121, Tyr-226, Ala-266, and Ser-268 together coordinate NADP(+). Tyr-226 functions as the Proton donor in the catalytic mechanism.

This sequence belongs to the short-chain dehydrogenases/reductases (SDR) family. Highly divergent.

It catalyses the reaction dehydrogriseofulvin + NADPH + H(+) = griseofulvin + NADP(+). It functions in the pathway secondary metabolite biosynthesis; terpenoid biosynthesis. Its function is as follows. Short chain dehydrogenase; part of the gene cluster that mediates the biosynthesis of griseofulvin, an important antifungal drug that has been in use for a long time for treating dermatophyte infections. The first step of the pathway is the formation of the heptaketide backbone by gsfA which is initiated by priming with acetyl-CoA, followed by sequential condensations of 6 malonyl-CoA units. The resulting benzophenone can undergo a spontaneous dehydration to form norlichexanthone. However, the true precursor for the griseofulvin biosynthesis is not norlichexanthone, but the heptaketide benzophenone that is O-methylated at 3-OH by gsfB to produce griseophenone D which is further methylated at 9-OH by gsfC to yield griseophenone C. Griseophenone C is then substrate of halogenase gsfI which is responsible for the regio-specific chlorination at the C13 position to form griseophenone B. The cytochrome P450 gsfF catalyzes the coupling of orcinol and phloroglucinol rings in griseophenone B to form desmethyl-dehydrogriseofulvin A which is further methylated at 5-OH by gsfD to yield dehydrogriseofulvin. Finally, gsfE performs stereospecific reduction of enone 18 of dehydrogriseofulvin to afford the final product griseofulvin. The chain is Short chain dehydrogenase gsfE from Penicillium aethiopicum.